Here is a 538-residue protein sequence, read N- to C-terminus: Atos homolog protein B (538 aa).

Disordered stretches follow at residues 1 to 99 (MRHV…PSTV), 165 to 185 (QGGQ…QLHT), and 199 to 270 (KSPV…GTLG). Over residues 227 to 238 (HTPPGPGPPGPC) the composition is skewed to pro residues. Phosphoserine is present on residues serine 254 and serine 255. The segment at 348–430 (LLGNFEESLL…VPKVGTIQVT (83 aa)) is required for macropage invasion. The interval 436-444 (QTVVKMFLV) is transactivation domain 1 (TAD1).

It belongs to the ATOS family.

It localises to the nucleus. Functionally, transcription regulator that syncronizes transcriptional and translational programs to promote macrophage invasion of tissues. The sequence is that of Atos homolog protein B from Mus musculus (Mouse).